Here is a 351-residue protein sequence, read N- to C-terminus: UDP-3-O-acylglucosamine N-acyltransferase (351 aa).

Residue H240 is the Proton acceptor of the active site.

The protein belongs to the transferase hexapeptide repeat family. LpxD subfamily. Homotrimer.

The catalysed reaction is a UDP-3-O-[(3R)-3-hydroxyacyl]-alpha-D-glucosamine + a (3R)-hydroxyacyl-[ACP] = a UDP-2-N,3-O-bis[(3R)-3-hydroxyacyl]-alpha-D-glucosamine + holo-[ACP] + H(+). Its pathway is bacterial outer membrane biogenesis; LPS lipid A biosynthesis. Catalyzes the N-acylation of UDP-3-O-acylglucosamine using 3-hydroxyacyl-ACP as the acyl donor. Is involved in the biosynthesis of lipid A, a phosphorylated glycolipid that anchors the lipopolysaccharide to the outer membrane of the cell. The polypeptide is UDP-3-O-acylglucosamine N-acyltransferase (Pseudomonas entomophila (strain L48)).